The following is a 455-amino-acid chain: MDTNNNIEKEILALIKQKVSPIEYENCLSQLKYNPNASKSDIAFFYAPNMLLCNWITAKHGALLKEILSQNKVGMHLAHSVDVRIEVAPKIQISAQPNINYKAVKTSVKDSYTFENFVVGSCNNTVYEIAKKVAQSDTPPYNPVLFYGGTGLGKTHILNAIGNHALEKHKKVVLVTSEDFLTDFLKHLDNQTMDSFKKKYRHCDFFLLDDAQFLQGKPKLEEEFFHTFNELHANSKQIVLISDRSPKNIAGLEDRLKSRFEWGITAKVMPPDLETKLSIVKQKCQLNKITLPEEVMEYIAQHISDNIRQMEGAIIKISVNANLMNAPIDLNLAKTVLEDLQKDHAEGSSLENILLAVAQSLNLKSSEIKISSRQKNVALARKLVVYFARLYTPNPTLSLAQFLDLKDHSSISKMYSSVKKMLEEEKSPFVLSLREEIKNRLNELNDKKTAFHSSE.

The domain I, interacts with DnaA modulators stretch occupies residues 1–75; sequence MDTNNNIEKE…EILSQNKVGM (75 aa). A domain II region spans residues 75 to 106; sequence MHLAHSVDVRIEVAPKIQISAQPNINYKAVKT. Positions 107 to 321 are domain III, AAA+ region; the sequence is SVKDSYTFEN…GAIIKISVNA (215 aa). ATP-binding residues include Gly-151, Gly-153, Lys-154, and Thr-155. Positions 322-455 are domain IV, binds dsDNA; that stretch reads NLMNAPIDLN…DKKTAFHSSE (134 aa).

Belongs to the DnaA family. Oligomerizes as a right-handed, spiral filament on DNA at oriC.

The protein resides in the cytoplasm. Its function is as follows. Plays an essential role in the initiation and regulation of chromosomal replication. ATP-DnaA binds to the origin of replication (oriC) to initiate formation of the DNA replication initiation complex once per cell cycle. Binds the DnaA box (a 9 base pair repeat at the origin) and separates the double-stranded (ds)DNA. Forms a right-handed helical filament on oriC DNA; dsDNA binds to the exterior of the filament while single-stranded (ss)DNA is stabiized in the filament's interior. The ATP-DnaA-oriC complex binds and stabilizes one strand of the AT-rich DNA unwinding element (DUE), permitting loading of DNA polymerase. After initiation quickly degrades to an ADP-DnaA complex that is not apt for DNA replication. Binds acidic phospholipids. The chain is Chromosomal replication initiator protein DnaA from Helicobacter pylori (strain Shi470).